We begin with the raw amino-acid sequence, 638 residues long: ATP-dependent zinc metalloprotease FtsH (638 aa).

Over M1–K15 the chain is Cytoplasmic. A helical membrane pass occupies residues P16–M36. The Periplasmic segment spans residues R37–N122. The chain crosses the membrane as a helical span at residues F123–F143. Residues M144–S638 lie on the Cytoplasmic side of the membrane. ATP is bound at residue G216 to T223. Zn(2+) is bound at residue H440. E441 is an active-site residue. Zn(2+) is bound by residues H444 and D517.

It in the central section; belongs to the AAA ATPase family. In the C-terminal section; belongs to the peptidase M41 family. Homohexamer. Zn(2+) serves as cofactor.

The protein resides in the cell inner membrane. In terms of biological role, acts as a processive, ATP-dependent zinc metallopeptidase for both cytoplasmic and membrane proteins. Plays a role in the quality control of integral membrane proteins. This is ATP-dependent zinc metalloprotease FtsH from Helicobacter felis (strain ATCC 49179 / CCUG 28539 / NCTC 12436 / CS1).